Here is an 84-residue protein sequence, read N- to C-terminus: Large ribosomal subunit protein bL27 (84 aa).

The interval 1–22 (MAHKKGASSTRNGRDSNAQRLG) is disordered. Residues 7–19 (ASSTRNGRDSNAQ) show a composition bias toward polar residues.

Belongs to the bacterial ribosomal protein bL27 family.

The protein is Large ribosomal subunit protein bL27 of Streptomyces coelicolor (strain ATCC BAA-471 / A3(2) / M145).